Consider the following 158-residue polypeptide: Transcription elongation factor GreA (158 aa).

A coiled-coil region spans residues 10-76; sequence TLEGKKKLEE…QIEKMIRNAE (67 aa).

The protein belongs to the GreA/GreB family.

In terms of biological role, necessary for efficient RNA polymerase transcription elongation past template-encoded arresting sites. The arresting sites in DNA have the property of trapping a certain fraction of elongating RNA polymerases that pass through, resulting in locked ternary complexes. Cleavage of the nascent transcript by cleavage factors such as GreA or GreB allows the resumption of elongation from the new 3'terminus. GreA releases sequences of 2 to 3 nucleotides. This chain is Transcription elongation factor GreA, found in Halalkalibacterium halodurans (strain ATCC BAA-125 / DSM 18197 / FERM 7344 / JCM 9153 / C-125) (Bacillus halodurans).